The sequence spans 207 residues: dTTP/UTP pyrophosphatase (207 aa).

The active-site Proton acceptor is Asp-79.

The protein belongs to the Maf family. YhdE subfamily. The cofactor is a divalent metal cation.

The protein localises to the cytoplasm. It carries out the reaction dTTP + H2O = dTMP + diphosphate + H(+). It catalyses the reaction UTP + H2O = UMP + diphosphate + H(+). Nucleoside triphosphate pyrophosphatase that hydrolyzes dTTP and UTP. May have a dual role in cell division arrest and in preventing the incorporation of modified nucleotides into cellular nucleic acids. This is dTTP/UTP pyrophosphatase from Rhodopseudomonas palustris (strain BisB18).